The chain runs to 1188 residues: DNA-directed RNA polymerase subunit beta (1188 aa).

The protein belongs to the RNA polymerase beta chain family. In terms of assembly, the RNAP catalytic core consists of 2 alpha, 1 beta, 1 beta' and 1 omega subunit. When a sigma factor is associated with the core the holoenzyme is formed, which can initiate transcription.

It catalyses the reaction RNA(n) + a ribonucleoside 5'-triphosphate = RNA(n+1) + diphosphate. DNA-dependent RNA polymerase catalyzes the transcription of DNA into RNA using the four ribonucleoside triphosphates as substrates. The protein is DNA-directed RNA polymerase subunit beta of Streptococcus gordonii (strain Challis / ATCC 35105 / BCRC 15272 / CH1 / DL1 / V288).